The following is a 602-amino-acid chain: Isocyanide synthase A (602 aa).

The protein belongs to the isocyanide synthase family.

Isocyanide synthase involved in the biosynthesis of isocyanides (or isonitriles), a class of microbial secondary metabolites. The presence of an isonitrile moiety within a compound imparts unique biological (cytotoxic, antibacterial, and antiprotozoal) and chemical (transition metal coordination) properties and enables synthetic and biochemical applications. This Aspergillus fumigatus (strain ATCC MYA-4609 / CBS 101355 / FGSC A1100 / Af293) (Neosartorya fumigata) protein is Isocyanide synthase A.